The sequence spans 274 residues: Merozoite surface protein 2 (274 aa).

A signal peptide spans 1 to 20 (MKVIKTLSIINFFIFVTFNI). N-linked (GlcNAc...) asparagine glycans are attached at residues Asn22 and Asn36. The disordered stretch occupies residues 43–234 (MAESKPPTGT…SDSQKECTDG (192 aa)). The interval 44-200 (AESKPPTGTG…EQTESPELQS (157 aa)) is polymorphic region. 2 consecutive repeat copies span residues 53–62 (GASGSAGSGA) and 63–72 (GASGSAGSGD). Positions 53 to 72 (GASGSAGSGAGASGSAGSGD) are 2 X 10 AA tandem repeats of G-A-S-G-S-A-G-S-G-[AD]. Gly residues predominate over residues 53-72 (GASGSAGSGAGASGSAGSGD). Residues 91-121 (SSSTPATTTTTTTTTTTTTTNDAEASTSTSS) show a composition bias toward low complexity. Polar residues-rich tracts occupy residues 122 to 131 (ENPNHNNAET), 140 to 167 (QKSNQANKETQNNSNVQQDSQTKSNVPP), and 174 to 202 (KSPTAQPEQAENSAPTAEQTESPELQSAP). N-linked (GlcNAc...) asparagine glycosylation is present at Asn151. A glycan (N-linked (GlcNAc...) asparagine) is linked at Asn223. Cys231 and Cys239 are disulfide-bonded. Residue Asn248 is glycosylated (N-linked (GlcNAc...) asparagine). A lipid anchor (GPI-anchor amidated asparagine) is attached at Asn248. Residues 249-274 (SSNIASINKFVVLISAKLVLSFAIFI) constitute a propeptide, removed in mature form.

It localises to the cell membrane. Its function is as follows. May play a role in the merozoite attachment to the erythrocyte. The chain is Merozoite surface protein 2 from Plasmodium falciparum (isolate kf1916).